Here is a 445-residue protein sequence, read N- to C-terminus: Tubulin beta chain (445 aa).

Positions 1 to 4 (MREI) match the MREI motif motif. Gln-11 contacts GTP. Ser-40 bears the Phosphoserine mark. Position 58 is an N6-acetyllysine; alternate (Lys-58). Lys-58 is subject to N6-succinyllysine; alternate. Residue Lys-58 forms a Glycyl lysine isopeptide (Lys-Gly) (interchain with G-Cter in ubiquitin); alternate linkage. GTP-binding residues include Glu-69, Ser-138, Gly-142, Thr-143, and Gly-144. Glu-69 serves as a coordination point for Mg(2+). Ser-172 carries the phosphoserine; by CDK1 modification. Residues Asn-204 and Asn-226 each coordinate GTP. Residues Thr-285 and Thr-290 each carry the phosphothreonine modification. An Omega-N-methylarginine modification is found at Arg-318. Residue Lys-324 forms a Glycyl lysine isopeptide (Lys-Gly) (interchain with G-Cter in ubiquitin) linkage. Residues 424–445 (QYQDATADEQGEFEEEGEEDEA) form a disordered region. Residues 429 to 445 (TADEQGEFEEEGEEDEA) are compositionally biased toward acidic residues. Glu-438 is modified (5-glutamyl polyglutamate).

Belongs to the tubulin family. In terms of assembly, dimer of alpha and beta chains. A typical microtubule is a hollow water-filled tube with an outer diameter of 25 nm and an inner diameter of 15 nM. Alpha-beta heterodimers associate head-to-tail to form protofilaments running lengthwise along the microtubule wall with the beta-tubulin subunit facing the microtubule plus end conferring a structural polarity. Microtubules usually have 13 protofilaments but different protofilament numbers can be found in some organisms and specialized cells. Interacts with NCKAP5L. Mg(2+) is required as a cofactor. In terms of processing, some glutamate residues at the C-terminus are polyglycylated, resulting in polyglycine chains on the gamma-carboxyl group. Glycylation is mainly limited to tubulin incorporated into axonemes (cilia and flagella) whereas glutamylation is prevalent in neuronal cells, centrioles, axonemes, and the mitotic spindle. Both modifications can coexist on the same protein on adjacent residues, and lowering polyglycylation levels increases polyglutamylation, and reciprocally. Cilia and flagella glycylation is required for their stability and maintenance. Flagella glycylation controls sperm motility. Some glutamate residues at the C-terminus are polyglutamylated, resulting in polyglutamate chains on the gamma-carboxyl group. Polyglutamylation plays a key role in microtubule severing by spastin (SPAST). SPAST preferentially recognizes and acts on microtubules decorated with short polyglutamate tails: severing activity by SPAST increases as the number of glutamates per tubulin rises from one to eight, but decreases beyond this glutamylation threshold. Post-translationally, phosphorylated on Ser-172 by CDK1 during the cell cycle, from metaphase to telophase, but not in interphase. This phosphorylation inhibits tubulin incorporation into microtubules.

The protein localises to the cytoplasm. The protein resides in the cytoskeleton. In terms of biological role, tubulin is the major constituent of microtubules, a cylinder consisting of laterally associated linear protofilaments composed of alpha- and beta-tubulin heterodimers. Microtubules grow by the addition of GTP-tubulin dimers to the microtubule end, where a stabilizing cap forms. Below the cap, tubulin dimers are in GDP-bound state, owing to GTPase activity of alpha-tubulin. This Sus scrofa (Pig) protein is Tubulin beta chain.